We begin with the raw amino-acid sequence, 266 residues long: ATP synthase subunit a (266 aa).

5 helical membrane passes run 28–48 (SINV…LVIF), 88–108 (LIAP…MMDL), 141–161 (DVNI…FYSI), 206–226 (LFGN…LLPW), and 237–257 (AIFH…LTVV).

Belongs to the ATPase A chain family. F-type ATPases have 2 components, CF(1) - the catalytic core - and CF(0) - the membrane proton channel. CF(1) has five subunits: alpha(3), beta(3), gamma(1), delta(1), epsilon(1). CF(0) has three main subunits: a(1), b(2) and c(9-12). The alpha and beta chains form an alternating ring which encloses part of the gamma chain. CF(1) is attached to CF(0) by a central stalk formed by the gamma and epsilon chains, while a peripheral stalk is formed by the delta and b chains.

The protein resides in the cell inner membrane. Key component of the proton channel; it plays a direct role in the translocation of protons across the membrane. The chain is ATP synthase subunit a from Pectobacterium atrosepticum (strain SCRI 1043 / ATCC BAA-672) (Erwinia carotovora subsp. atroseptica).